The sequence spans 101 residues: Large ribosomal subunit protein bL21 (101 aa).

The protein belongs to the bacterial ribosomal protein bL21 family. As to quaternary structure, part of the 50S ribosomal subunit. Contacts protein L20.

Functionally, this protein binds to 23S rRNA in the presence of protein L20. The chain is Large ribosomal subunit protein bL21 from Thermus thermophilus (strain ATCC BAA-163 / DSM 7039 / HB27).